The following is a 284-amino-acid chain: Bifunctional protein FolD (284 aa).

NADP(+) is bound by residues 166-168 and Ser191; that span reads GRS.

The protein belongs to the tetrahydrofolate dehydrogenase/cyclohydrolase family. Homodimer.

The enzyme catalyses (6R)-5,10-methylene-5,6,7,8-tetrahydrofolate + NADP(+) = (6R)-5,10-methenyltetrahydrofolate + NADPH. The catalysed reaction is (6R)-5,10-methenyltetrahydrofolate + H2O = (6R)-10-formyltetrahydrofolate + H(+). It functions in the pathway one-carbon metabolism; tetrahydrofolate interconversion. Its function is as follows. Catalyzes the oxidation of 5,10-methylenetetrahydrofolate to 5,10-methenyltetrahydrofolate and then the hydrolysis of 5,10-methenyltetrahydrofolate to 10-formyltetrahydrofolate. This Leptospira interrogans serogroup Icterohaemorrhagiae serovar copenhageni (strain Fiocruz L1-130) protein is Bifunctional protein FolD.